We begin with the raw amino-acid sequence, 316 residues long: UDP-3-O-acylglucosamine N-acyltransferase 2 (316 aa).

Residue histidine 230 is the Proton acceptor of the active site.

Belongs to the transferase hexapeptide repeat family. LpxD subfamily. As to quaternary structure, homotrimer.

The catalysed reaction is a UDP-3-O-[(3R)-3-hydroxyacyl]-alpha-D-glucosamine + a (3R)-hydroxyacyl-[ACP] = a UDP-2-N,3-O-bis[(3R)-3-hydroxyacyl]-alpha-D-glucosamine + holo-[ACP] + H(+). The protein operates within bacterial outer membrane biogenesis; LPS lipid A biosynthesis. Functionally, catalyzes the N-acylation of UDP-3-O-acylglucosamine using 3-hydroxyacyl-ACP as the acyl donor. Is involved in the biosynthesis of lipid A, a phosphorylated glycolipid that anchors the lipopolysaccharide to the outer membrane of the cell. This Sulfurimonas denitrificans (strain ATCC 33889 / DSM 1251) (Thiomicrospira denitrificans (strain ATCC 33889 / DSM 1251)) protein is UDP-3-O-acylglucosamine N-acyltransferase 2.